A 237-amino-acid polypeptide reads, in one-letter code: Small ribosomal subunit protein uS2 (237 aa).

Belongs to the universal ribosomal protein uS2 family.

This Clostridioides difficile (strain 630) (Peptoclostridium difficile) protein is Small ribosomal subunit protein uS2.